The chain runs to 600 residues: Dihydroxy-acid dehydratase (600 aa).

D82 is a binding site for Mg(2+). Position 123 (C123) interacts with [2Fe-2S] cluster. 2 residues coordinate Mg(2+): D124 and K125. K125 carries the post-translational modification N6-carboxylysine. C192 is a [2Fe-2S] cluster binding site. Residue E489 coordinates Mg(2+). S515 acts as the Proton acceptor in catalysis.

The protein belongs to the IlvD/Edd family. As to quaternary structure, homodimer. [2Fe-2S] cluster is required as a cofactor. Requires Mg(2+) as cofactor.

The catalysed reaction is (2R)-2,3-dihydroxy-3-methylbutanoate = 3-methyl-2-oxobutanoate + H2O. The enzyme catalyses (2R,3R)-2,3-dihydroxy-3-methylpentanoate = (S)-3-methyl-2-oxopentanoate + H2O. It participates in amino-acid biosynthesis; L-isoleucine biosynthesis; L-isoleucine from 2-oxobutanoate: step 3/4. The protein operates within amino-acid biosynthesis; L-valine biosynthesis; L-valine from pyruvate: step 3/4. Functions in the biosynthesis of branched-chain amino acids. Catalyzes the dehydration of (2R,3R)-2,3-dihydroxy-3-methylpentanoate (2,3-dihydroxy-3-methylvalerate) into 2-oxo-3-methylpentanoate (2-oxo-3-methylvalerate) and of (2R)-2,3-dihydroxy-3-methylbutanoate (2,3-dihydroxyisovalerate) into 2-oxo-3-methylbutanoate (2-oxoisovalerate), the penultimate precursor to L-isoleucine and L-valine, respectively. This Bacteroides fragilis (strain YCH46) protein is Dihydroxy-acid dehydratase.